We begin with the raw amino-acid sequence, 285 residues long: Coagulation factor IX (285 aa).

Residue Tyr-23 is modified to Sulfotyrosine. An N-linked (GlcNAc...) asparagine glycan is attached at Asn-25. Thr-27 is modified (phosphothreonine; alternate). O-linked (GalNAc...) threonine; alternate glycosylation is present at Thr-27. N-linked (GlcNAc...) asparagine glycosylation is present at Asn-45. An O-linked (GalNAc...) threonine glycan is attached at Thr-47. One can recognise a Peptidase S1 domain in the interval 59-285 (VVGGEDAKPG…YTKVSRYVNW (227 aa)). Residues Cys-84 and Cys-100 are joined by a disulfide bond. The active-site Charge relay system is His-99. Ca(2+)-binding residues include Asn-115, Glu-120, and Glu-123. Asn-127 and Asn-138 each carry an N-linked (GlcNAc...) asparagine glycan. Asp-147 serves as the catalytic Charge relay system. 2 cysteine pairs are disulfide-bonded: Cys-214–Cys-228 and Cys-239–Cys-267. Ser-243 (charge relay system) is an active-site residue.

It belongs to the peptidase S1 family. Heterodimer of a light chain and a heavy chain; disulfide-linked. Interacts (inactive and activated) with F11 (activated) in calcium-dependent manner. Interacts with SERPINC1. In terms of processing, activated by factor XIa, which excises the activation peptide. The propeptide can also be removed by snake venom protease. Activated by coagulation factor VIIa-tissue factor (F7-F3) complex in calcium-dependent manner.

The protein localises to the secreted. The enzyme catalyses Selective cleavage of Arg-|-Ile bond in factor X to form factor Xa.. In terms of biological role, factor IX is a vitamin K-dependent plasma protein that participates in the intrinsic pathway of blood coagulation by converting factor X to its active form in the presence of Ca(2+) ions, phospholipids, and factor VIIIa. This Cavia porcellus (Guinea pig) protein is Coagulation factor IX (F9).